The primary structure comprises 158 residues: Putative cTAGE family member 3 (158 aa).

A coiled-coil region spans residues 26 to 96 (QLQESQKQLL…AAVLEEDITD (71 aa)).

This sequence belongs to the cTAGE family. As to expression, expressed in normal tissues including colon, mammary gland, ovary, placenta, stomach and testis, as well as several fetal tissues.

In terms of biological role, tumor-associated antigen. The chain is Putative cTAGE family member 3 (CTAGE3P) from Homo sapiens (Human).